A 199-amino-acid chain; its full sequence is Cytochrome c oxidase subunit 2 (199 aa).

Residues 1 to 13 traverse the membrane as a helical segment; the sequence is AICSLVLYLLSLM. The Mitochondrial matrix segment spans residues 14–26; the sequence is LMEKLSSNTVDAQ. A helical membrane pass occupies residues 27-54; the sequence is EVELIWTILPAIVLILLALPSLQILYMM. Residues 55 to 199 lie on the Mitochondrial intermembrane side of the membrane; that stretch reads DEIDEPDLTL…SSLLSSSSSL (145 aa). Residues H128, C163, E165, C167, H171, and M174 each coordinate Cu cation. E165 is a Mg(2+) binding site.

Belongs to the cytochrome c oxidase subunit 2 family. In terms of assembly, component of the cytochrome c oxidase (complex IV, CIV), a multisubunit enzyme composed of 14 subunits. The complex is composed of a catalytic core of 3 subunits MT-CO1, MT-CO2 and MT-CO3, encoded in the mitochondrial DNA, and 11 supernumerary subunits COX4I, COX5A, COX5B, COX6A, COX6B, COX6C, COX7A, COX7B, COX7C, COX8 and NDUFA4, which are encoded in the nuclear genome. The complex exists as a monomer or a dimer and forms supercomplexes (SCs) in the inner mitochondrial membrane with NADH-ubiquinone oxidoreductase (complex I, CI) and ubiquinol-cytochrome c oxidoreductase (cytochrome b-c1 complex, complex III, CIII), resulting in different assemblies (supercomplex SCI(1)III(2)IV(1) and megacomplex MCI(2)III(2)IV(2)). Found in a complex with TMEM177, COA6, COX18, COX20, SCO1 and SCO2. Interacts with TMEM177 in a COX20-dependent manner. Interacts with COX20. Interacts with COX16. Cu cation serves as cofactor.

The protein resides in the mitochondrion inner membrane. The catalysed reaction is 4 Fe(II)-[cytochrome c] + O2 + 8 H(+)(in) = 4 Fe(III)-[cytochrome c] + 2 H2O + 4 H(+)(out). Functionally, component of the cytochrome c oxidase, the last enzyme in the mitochondrial electron transport chain which drives oxidative phosphorylation. The respiratory chain contains 3 multisubunit complexes succinate dehydrogenase (complex II, CII), ubiquinol-cytochrome c oxidoreductase (cytochrome b-c1 complex, complex III, CIII) and cytochrome c oxidase (complex IV, CIV), that cooperate to transfer electrons derived from NADH and succinate to molecular oxygen, creating an electrochemical gradient over the inner membrane that drives transmembrane transport and the ATP synthase. Cytochrome c oxidase is the component of the respiratory chain that catalyzes the reduction of oxygen to water. Electrons originating from reduced cytochrome c in the intermembrane space (IMS) are transferred via the dinuclear copper A center (CU(A)) of subunit 2 and heme A of subunit 1 to the active site in subunit 1, a binuclear center (BNC) formed by heme A3 and copper B (CU(B)). The BNC reduces molecular oxygen to 2 water molecules using 4 electrons from cytochrome c in the IMS and 4 protons from the mitochondrial matrix. In Rhea americana (Greater rhea), this protein is Cytochrome c oxidase subunit 2 (MT-CO2).